The primary structure comprises 601 residues: Proline--tRNA ligase (601 aa).

It belongs to the class-II aminoacyl-tRNA synthetase family. ProS type 1 subfamily. Homodimer.

Its subcellular location is the cytoplasm. It carries out the reaction tRNA(Pro) + L-proline + ATP = L-prolyl-tRNA(Pro) + AMP + diphosphate. Its function is as follows. Catalyzes the attachment of proline to tRNA(Pro) in a two-step reaction: proline is first activated by ATP to form Pro-AMP and then transferred to the acceptor end of tRNA(Pro). As ProRS can inadvertently accommodate and process non-cognate amino acids such as alanine and cysteine, to avoid such errors it has two additional distinct editing activities against alanine. One activity is designated as 'pretransfer' editing and involves the tRNA(Pro)-independent hydrolysis of activated Ala-AMP. The other activity is designated 'posttransfer' editing and involves deacylation of mischarged Ala-tRNA(Pro). The misacylated Cys-tRNA(Pro) is not edited by ProRS. This chain is Proline--tRNA ligase, found in Picosynechococcus sp. (strain ATCC 27264 / PCC 7002 / PR-6) (Agmenellum quadruplicatum).